Consider the following 421-residue polypeptide: Pyridinium-3,5-bisthiocarboxylic acid mononucleotide nickel insertion protein (421 aa).

The protein belongs to the LarC family.

It catalyses the reaction Ni(II)-pyridinium-3,5-bisthiocarboxylate mononucleotide = pyridinium-3,5-bisthiocarboxylate mononucleotide + Ni(2+). Functionally, involved in the biosynthesis of a nickel-pincer cofactor ((SCS)Ni(II) pincer complex). Binds Ni(2+), and functions in nickel delivery to pyridinium-3,5-bisthiocarboxylic acid mononucleotide (P2TMN), to form the mature cofactor. Is thus probably required for the activation of nickel-pincer cofactor-dependent enzymes. The polypeptide is Pyridinium-3,5-bisthiocarboxylic acid mononucleotide nickel insertion protein (Alkaliphilus metalliredigens (strain QYMF)).